A 258-amino-acid polypeptide reads, in one-letter code: Deoxyribose-phosphate aldolase (258 aa).

Catalysis depends on Asp101, which acts as the Proton donor/acceptor. Lys166 serves as the catalytic Schiff-base intermediate with acetaldehyde. The active-site Proton donor/acceptor is Lys200.

Belongs to the DeoC/FbaB aldolase family. DeoC type 2 subfamily.

Its subcellular location is the cytoplasm. The catalysed reaction is 2-deoxy-D-ribose 5-phosphate = D-glyceraldehyde 3-phosphate + acetaldehyde. The protein operates within carbohydrate degradation; 2-deoxy-D-ribose 1-phosphate degradation; D-glyceraldehyde 3-phosphate and acetaldehyde from 2-deoxy-alpha-D-ribose 1-phosphate: step 2/2. Its function is as follows. Catalyzes a reversible aldol reaction between acetaldehyde and D-glyceraldehyde 3-phosphate to generate 2-deoxy-D-ribose 5-phosphate. This is Deoxyribose-phosphate aldolase from Actinobacillus pleuropneumoniae serotype 3 (strain JL03).